The primary structure comprises 146 residues: Hemoglobin subunit beta-S/F (146 aa).

N-acetylvaline is present on V1. The region spanning 2-146 is the Globin domain; it reads HLTDGEKNAI…VANALSHKYH (145 aa). At S44 the chain carries Phosphoserine. K59 carries the N6-acetyllysine modification. H63 is a heme b binding site. K82 carries the N6-acetyllysine modification. Heme b is bound at residue H92. C93 bears the S-nitrosocysteine mark. K144 carries the N6-acetyllysine modification.

This sequence belongs to the globin family. As to quaternary structure, heterotetramer of two alpha chains and two beta chains. Red blood cells.

Involved in oxygen transport from the lung to the various peripheral tissues. This chain is Hemoglobin subunit beta-S/F, found in Urocitellus townsendii (Townsend's ground squirrel).